Here is a 185-residue protein sequence, read N- to C-terminus: Probable dehydrin LEA (185 aa).

Composition is skewed to basic and acidic residues over residues 1–10 (MADLRDEKGN) and 44–55 (QHKESTTSDIAE). The disordered stretch occupies residues 1 to 185 (MADLRDEKGN…LPGHHNHNHP (185 aa)). Low complexity predominate over residues 67–94 (AAAPAGAGAATAATATGVSAGTGATTTG). Basic and acidic residues predominate over residues 130-146 (KEKIKEKFGSGKHKDEQ). A compositionally biased stretch (low complexity) spans 147–159 (TPATATTTGPATT). Residues 161-177 (QPHEKKGILEKIKDKLP) show a composition bias toward basic and acidic residues.

Belongs to the plant dehydrin family.

In Arabidopsis thaliana (Mouse-ear cress), this protein is Probable dehydrin LEA (LEA).